A 359-amino-acid chain; its full sequence is Archaemetzincin-2 (359 aa).

H254 provides a ligand contact to Zn(2+). E255 serves as the catalytic Proton acceptor. H258, H264, C265, C270, C289, and C292 together coordinate Zn(2+).

It belongs to the peptidase M54 family. The cofactor is Zn(2+).

Its function is as follows. Probable zinc metalloprotease. The protein is Archaemetzincin-2 (Amz2) of Rattus norvegicus (Rat).